The chain runs to 423 residues: Structure-specific endonuclease subunit SLX1 (423 aa).

The GIY-YIG domain occupies 23-105; it reads AFYCCYLLRS…QNTKVSRHAD (83 aa). Disordered stretches follow at residues 300–334 and 365–406; these read RRRRQAGTPKGQGLKSVRGRGRGRGHSEDESDALQ and AHRP…LGLQ.

Belongs to the SLX1 family. Forms a heterodimer with SLX4. It depends on a divalent metal cation as a cofactor.

It localises to the nucleus. Catalytic subunit of the SLX1-SLX4 structure-specific endonuclease that resolves DNA secondary structures generated during DNA repair and recombination. Has endonuclease activity towards branched DNA substrates, introducing single-strand cuts in duplex DNA close to junctions with ss-DNA. The protein is Structure-specific endonuclease subunit SLX1 of Paracoccidioides brasiliensis (strain Pb03).